We begin with the raw amino-acid sequence, 33 residues long: Brevinin-2CDYb (33 aa).

A disulfide bridge links cysteine 27 with cysteine 33.

Belongs to the frog skin active peptide (FSAP) family. Brevinin subfamily. In terms of tissue distribution, expressed by the skin glands.

It localises to the secreted. Antimicrobial peptide. The protein is Brevinin-2CDYb of Rana dybowskii (Dybovsky's frog).